We begin with the raw amino-acid sequence, 303 residues long: UDP-N-acetylenolpyruvoylglucosamine reductase (303 aa).

Positions 29-196 constitute an FAD-binding PCMH-type domain; sequence KIGGPADVLV…LEAVLQLEQK (168 aa). Arg-174 is an active-site residue. The active-site Proton donor is the Ser-225. Residue Glu-295 is part of the active site.

The protein belongs to the MurB family. FAD is required as a cofactor.

It is found in the cytoplasm. It catalyses the reaction UDP-N-acetyl-alpha-D-muramate + NADP(+) = UDP-N-acetyl-3-O-(1-carboxyvinyl)-alpha-D-glucosamine + NADPH + H(+). The protein operates within cell wall biogenesis; peptidoglycan biosynthesis. Functionally, cell wall formation. The sequence is that of UDP-N-acetylenolpyruvoylglucosamine reductase from Bacillus licheniformis (strain ATCC 14580 / DSM 13 / JCM 2505 / CCUG 7422 / NBRC 12200 / NCIMB 9375 / NCTC 10341 / NRRL NRS-1264 / Gibson 46).